A 97-amino-acid polypeptide reads, in one-letter code: Large ribosomal subunit protein uL23 (97 aa).

It belongs to the universal ribosomal protein uL23 family. As to quaternary structure, part of the 50S ribosomal subunit. Contacts protein L29, and trigger factor when it is bound to the ribosome.

One of the early assembly proteins it binds 23S rRNA. One of the proteins that surrounds the polypeptide exit tunnel on the outside of the ribosome. Forms the main docking site for trigger factor binding to the ribosome. This is Large ribosomal subunit protein uL23 from Mesorhizobium japonicum (strain LMG 29417 / CECT 9101 / MAFF 303099) (Mesorhizobium loti (strain MAFF 303099)).